Reading from the N-terminus, the 427-residue chain is MMEYKIVENGLTYRIGNGASVPISNTGELIKGLRNYGPYEVPSLKYNQIALIHNNQFSSLINQLKSQISSKIDEVWHIHNINISEFIYDSPHFDSIKSQVDNAIDTGVDGIMLVLPEYNTPLYYKLKSYLINSIPSQFMRYDILSNRNLTFYVDNLLVQFVSKLGGKPWILNVDPEKGSDIIIGTGATRIDNVNLFCFAMVFKKDGTMLWNEISPIVTSSEYLTYLKSTIKKVVYGFKKSNPDWDVEKLTLHVSGKRPKMKDGETKILKETVEELKKQEMVSRDVKYAILHLNETHPFWVMGDPNNRFHPYEGTKVKLSSKRYLLTLLQPYLKRNGLEMVTPIKPLSVEIVSDNWTSEEYYHNVHEILDEIYYLSKMNWRGFRSRNLPVTVNYPKLVAGIIANVNRYGGYPINPEGNRSLQTNPWFL.

Positions 38–167 (PYEVPSLKYN…VQFVSKLGGK (130 aa)) are mid domain. Positions 110–406 (GIMLVLPEYN…VAGIIANVNR (297 aa)) constitute a Piwi domain. The segment at 118 to 124 (YNTPLYY) is binds 5'-phosphorylated end of guide DNA. The interval 147-148 (RN) is binds target DNA. A binds guide DNA region spans residues 150–155 (TFYVDN). A divalent metal cation is bound by residues glutamine 159 and leucine 427. The tract at residues 168–427 (PWILNVDPEK…RSLQTNPWFL (260 aa)) is PIWI domain.

This sequence belongs to the argonaute family. Short pAgo subfamily. In terms of assembly, homodimer probably stabilized by DNA. Each subunit is capable of interacting with a DNA molecule. Requires a divalent metal cation as cofactor.

In terms of biological role, might play a role in defense against invading genetic elements, using short nucleic acid sequences as guides to bind complementary target strands, resulting in slicing of the target nucleic acid. Binds nucleic acids with decreasing affinity in the following order; ssDNA, ssRNA, dsDNA, RNA-DNA, RNA-RNA. Association of the 5' seed region of the guide strand (nucleotides 2-7) with AfPiwi increases affinity for the corresponding target strand; the greatest increase in affinity is for guide DNA with target RNA. This is Piwi protein from Archaeoglobus fulgidus (strain ATCC 49558 / DSM 4304 / JCM 9628 / NBRC 100126 / VC-16).